The following is a 340-amino-acid chain: Flavonoid 7-O-methyltransferase 2 (340 aa).

An S-adenosyl-L-methionine-binding site is contributed by Asp-207. The Proton acceptor role is filled by His-245.

Belongs to the class I-like SAM-binding methyltransferase superfamily. Cation-independent O-methyltransferase family. Homodimer. In terms of tissue distribution, expressed in leaves.

It carries out the reaction scutellarein 4'-methyl ether + S-adenosyl-L-methionine = ladanein + S-adenosyl-L-homocysteine. The enzyme catalyses acacetin + S-adenosyl-L-methionine = apigenin 4',7-dimethyl ether + S-adenosyl-L-homocysteine. It catalyses the reaction diosmetin + S-adenosyl-L-methionine = luteolin 4',7-dimethyl ether + S-adenosyl-L-homocysteine. The catalysed reaction is chrysoeriol + S-adenosyl-L-methionine = velutin + S-adenosyl-L-homocysteine. It carries out the reaction (2S)-naringenin + S-adenosyl-L-methionine = (2S)-sakuranetin + S-adenosyl-L-homocysteine + H(+). The enzyme catalyses apigenin + S-adenosyl-L-methionine = genkwanin + S-adenosyl-L-homocysteine + H(+). It catalyses the reaction luteolin + S-adenosyl-L-methionine = luteolin 7-methyl ether + S-adenosyl-L-homocysteine + H(+). The catalysed reaction is scutellarein + S-adenosyl-L-methionine = scutellarein 7-methyl ether + S-adenosyl-L-homocysteine. Its pathway is flavonoid metabolism. Flavonoid 7-O-methyltransferase involved in the biosynthesis of polymethoxylated flavonoids natural products such as nevadensin and salvigenin, aroma compounds which contribute to the flavor of sweet basil, and exhibit pharmacological activities such as anti-allergic, anti-oxidant, antibacterial, anti-proliferative, and anti-inflammatory effects. Catalyzes S-adenosylmethionine-dependent regioselective 7-O-methylation of flavonoids; active on various hydroxylated flavonoid substrates, including apigenin (API) and luteolin (LUT), and, with a lower efficiency, scutellarein (SCU), naringenin (NAR), chrysoeriol (CHRYS), diosmetin (DIOS), acacetin (ACA) and scutellarein-7-methyl ether (SCU7Me). This Ocimum basilicum (Sweet basil) protein is Flavonoid 7-O-methyltransferase 2.